We begin with the raw amino-acid sequence, 148 residues long: Sec-independent protein translocase protein TatB (148 aa).

A helical transmembrane segment spans residues 1–21 (MFGISFSELLLVGLVALLVLG). Residues 85 to 148 (EPTPVEHVGE…NDTTQPPRAP (64 aa)) are disordered. The span at 107-148 (APAVAPTESAPVVAPASVEHVAQTAAPTTPAPNDTTQPPRAP) shows a compositional bias: low complexity.

This sequence belongs to the TatB family. The Tat system comprises two distinct complexes: a TatABC complex, containing multiple copies of TatA, TatB and TatC subunits, and a separate TatA complex, containing only TatA subunits. Substrates initially bind to the TatABC complex, which probably triggers association of the separate TatA complex to form the active translocon.

The protein resides in the cell inner membrane. Its function is as follows. Part of the twin-arginine translocation (Tat) system that transports large folded proteins containing a characteristic twin-arginine motif in their signal peptide across membranes. Together with TatC, TatB is part of a receptor directly interacting with Tat signal peptides. TatB may form an oligomeric binding site that transiently accommodates folded Tat precursor proteins before their translocation. The sequence is that of Sec-independent protein translocase protein TatB from Pseudomonas fluorescens (strain Pf0-1).